We begin with the raw amino-acid sequence, 363 residues long: Ly6/PLAUR domain-containing protein 3 (363 aa).

The N-terminal stretch at 1 to 32 (MDAARRGDTQPVMWTTGWLLLLPLLLCEGAQA) is a signal peptide. One can recognise a UPAR/Ly6 1 domain in the interval 35–128 (CYSCVQKADD…LNLTLRGLNP (94 aa)). Residues asparagine 120, asparagine 131, asparagine 178, and asparagine 185 are each glycosylated (N-linked (GlcNAc...) asparagine). Positions 142–224 (CYSCVGLSRE…GSCCQGPRCN (83 aa)) constitute a UPAR/Ly6 2 domain. The segment covering 238 to 248 (PPLVLLPPPTT) has biased composition (pro residues). Disordered regions lie at residues 238-287 (PPLV…TSPH) and 301-336 (LSGG…GGAQ). Positions 249 to 278 (AAPSTRAQNSSSTTSTAAPTTTTSIIKPTT) are enriched in low complexity. The segment covering 304–318 (GAAGHGGTAGHGGAA) has biased composition (gly residues). Over residues 320-330 (HQDRSNMEKYP) the composition is skewed to basic and acidic residues. A lipid anchor (GPI-anchor amidated serine) is attached at serine 343. Residues 344 to 363 (GTLGSWLSAVLLTVVAGAML) constitute a propeptide, removed in mature form.

Binds laminin-1 and laminin-5. Interacts with LGALS3. Interacts with AGR2 and AGR3.

The protein localises to the cell membrane. Supports cell migration. May be involved in tumor progression. The chain is Ly6/PLAUR domain-containing protein 3 (Lypd3) from Mus musculus (Mouse).